The sequence spans 91 residues: Gene 76 protein (91 aa).

A disordered region spans residues 58 to 81; sequence ELPSCDESPKGEARRDNDNRDGGK.

This chain is Gene 76 protein (76), found in Mycobacterium phage L5 (Mycobacteriophage L5).